The chain runs to 92 residues: Protein LSO2 (92 aa).

Composition is skewed to basic and acidic residues over residues methionine 1 to alanine 10 and glutamate 38 to alanine 72. The segment at methionine 1–lysine 92 is disordered. A coiled-coil region spans residues alanine 17–glutamine 80.

The protein belongs to the CCDC124 family. Associates with translationally inactive ribosomes in the nonrotated state. LSO2 bridges the decoding sites of the small with the GTPase activating center (GAC) of the large subunit. This position allows accommodation of the DOM34-dependent ribosome recycling system, which splits LSO2-containing ribosomes.

It localises to the nucleus. Its subcellular location is the cytoplasm. In terms of biological role, ribosome-binding protein involved in ribosome hibernation by associating with translationally inactive ribosomes. Required for translational recovery after starvation from stationary phase. May facilitate rapid translation reactivation by stabilizing the recycling-competent state of inactive ribosomes. The polypeptide is Protein LSO2 (Saccharomyces cerevisiae (strain ATCC 204508 / S288c) (Baker's yeast)).